We begin with the raw amino-acid sequence, 334 residues long: Ornithine carbamoyltransferase (334 aa).

Carbamoyl phosphate contacts are provided by residues 56 to 59 (STRT), Gln83, Arg107, and 134 to 137 (HPTQ). L-ornithine is bound by residues Asn168, Asp232, and 236–237 (SM). Carbamoyl phosphate contacts are provided by residues 274-275 (CL) and Arg320.

Belongs to the aspartate/ornithine carbamoyltransferase superfamily. OTCase family.

It is found in the cytoplasm. It catalyses the reaction carbamoyl phosphate + L-ornithine = L-citrulline + phosphate + H(+). Its pathway is amino-acid biosynthesis; L-arginine biosynthesis; L-arginine from L-ornithine and carbamoyl phosphate: step 1/3. Reversibly catalyzes the transfer of the carbamoyl group from carbamoyl phosphate (CP) to the N(epsilon) atom of ornithine (ORN) to produce L-citrulline. In Shigella boydii serotype 4 (strain Sb227), this protein is Ornithine carbamoyltransferase.